A 547-amino-acid chain; its full sequence is Chaperonin GroEL 1 (547 aa).

ATP-binding positions include 30–33 (TLGP), Lys-51, 87–91 (DGTTT), Gly-415, and Asp-494. The tract at residues 524-547 (PKGKAKGGGAGAGMPDYGGDDMDY) is disordered.

The protein belongs to the chaperonin (HSP60) family. Forms a cylinder of 14 subunits composed of two heptameric rings stacked back-to-back. Interacts with the co-chaperonin GroES.

It localises to the cytoplasm. It carries out the reaction ATP + H2O + a folded polypeptide = ADP + phosphate + an unfolded polypeptide.. Its function is as follows. Together with its co-chaperonin GroES, plays an essential role in assisting protein folding. The GroEL-GroES system forms a nano-cage that allows encapsulation of the non-native substrate proteins and provides a physical environment optimized to promote and accelerate protein folding. The chain is Chaperonin GroEL 1 from Myxococcus xanthus (strain DK1622).